Here is a 456-residue protein sequence, read N- to C-terminus: Anthocyanidin 3-O-glucosyltransferase UFGT (456 aa).

Kaempferol is bound at residue Ser18. Ser18 contributes to the quercetin binding site. Thr19 is a UDP binding site. Position 19 (Thr19) interacts with UDP-alpha-D-glucose. Residues His20 and Gln84 each coordinate kaempferol. His20 (proton acceptor) is an active-site residue. Residue Gln84 coordinates quercetin. The Charge relay role is filled by Asp119. Thr141 is a binding site for UDP-alpha-D-glucose. Kaempferol is bound by residues His150 and Gln188. The quercetin site is built by His150 and Gln188. Residues Thr280, Ser306, Trp332, Ala333, and His350 each coordinate UDP. Thr280, Ser306, Trp332, Ala333, His350, Trp353, Asn354, Ser355, and Glu358 together coordinate UDP-alpha-D-glucose. UDP contacts are provided by Asn354, Ser355, and Glu358. Gly373 is a binding site for quercetin. Residues Asp374 and Gln375 each contribute to the UDP-alpha-D-glucose site.

Belongs to the UDP-glycosyltransferase family. In terms of tissue distribution, detected only in berry skin.

It catalyses the reaction an anthocyanidin + UDP-alpha-D-glucose + H(+) = an anthocyanidin 3-O-beta-D-glucoside + UDP. It carries out the reaction cyanidin + UDP-alpha-D-glucose = cyanidin 3-O-beta-D-glucoside + UDP + H(+). The enzyme catalyses delphinidin + UDP-alpha-D-glucose = delphinidin 3-O-beta-D-glucoside + UDP. The catalysed reaction is peonidin + UDP-alpha-D-glucose = peonidin 3-O-beta-D-glucoside + UDP. It catalyses the reaction pelargonidin + UDP-alpha-D-glucose = pelargonidin 3-O-beta-D-glucoside + UDP. It carries out the reaction malvidin + UDP-alpha-D-glucose = malvidin 3-O-beta-D-glucoside + UDP. The enzyme catalyses a flavonol + UDP-alpha-D-glucose = a flavonol 3-O-beta-D-glucoside + UDP + H(+). It participates in pigment biosynthesis; anthocyanin biosynthesis. With respect to regulation, inhibited by Mn(2+) and Zn(2+). Its function is as follows. In the presence of other necessary color factors, this glycosylation reaction allows the accumulation of anthocyanin pigments. Involved in the formation of red wine pigments. UDP-glucose (UDP-Glc) is the physiological sugar donor, and cyanidin is the natural acceptor in vivo. Can glucosylate the anthocyanidins delphinidin, peonidin, pelargonidin and malvidin. The flavonols quercitin and kaempferol can also be glucosylated in vitro, but with glucosylation rates 50-100 times lower than cyanidin. In vitro, can use UDP-Glc, UDP-5SGlc, UDP-Xyl, UDP-Man, UDP-Gal, UDP-GlcNAc, GDP-Glc, dTDP-Glc and dTDP-Xyl as sugar donors, but not UDP-6OMeGal, UDP-Ara, UDP-6FGal, UDP-GlcN, UDP-2FGal, UDP-5SAra, GDP-Man, GDP-Fuc, UDP-Fuc or UDP-Rha. The chain is Anthocyanidin 3-O-glucosyltransferase UFGT from Vitis vinifera (Grape).